Here is a 176-residue protein sequence, read N- to C-terminus: Thiol-disulfide oxidoreductase ResA (176 aa).

Residues 11–30 form a helical; Signal-anchor for type II membrane protein membrane-spanning segment; that stretch reads LSILAVISVALGYTFYSNFF. Residues 36–176 enclose the Thioredoxin domain; sequence ARAGEQAVNF…EFMELIKPEA (141 aa). A disulfide bridge links Cys-74 with Cys-77.

Belongs to the thioredoxin family. ResA subfamily.

The protein resides in the cell membrane. It participates in protein modification; cytochrome c assembly. Its function is as follows. Thiol-disulfide oxidoreductase which is required in disulfide reduction during c-type cytochrome synthesis. May accept reducing equivalents from CcdA, leading to breakage of disulfide bonds in apocytochrome c; following this reduction heme can be covalently attached. The chain is Thiol-disulfide oxidoreductase ResA from Halalkalibacterium halodurans (strain ATCC BAA-125 / DSM 18197 / FERM 7344 / JCM 9153 / C-125) (Bacillus halodurans).